A 129-amino-acid polypeptide reads, in one-letter code: Large ribosomal subunit protein bL19c (129 aa).

This sequence belongs to the bacterial ribosomal protein bL19 family.

The protein resides in the plastid. This Prototheca wickerhamii protein is Large ribosomal subunit protein bL19c.